A 281-amino-acid polypeptide reads, in one-letter code: LIM domain-containing protein G (281 aa).

LIM zinc-binding domains follow at residues 40–101 (LNCS…IKFN), 141–205 (DICT…SKQV), and 206–262 (NCFA…FTQP).

This is LIM domain-containing protein G (limG) from Dictyostelium discoideum (Social amoeba).